A 125-amino-acid chain; its full sequence is Aspartate 1-decarboxylase (125 aa).

S25 (schiff-base intermediate with substrate; via pyruvic acid) is an active-site residue. A Pyruvic acid (Ser) modification is found at S25. Substrate is bound at residue T57. The active-site Proton donor is Y58. 71–73 (GAA) lines the substrate pocket.

The protein belongs to the PanD family. Heterooctamer of four alpha and four beta subunits. Pyruvate is required as a cofactor. In terms of processing, is synthesized initially as an inactive proenzyme, which is activated by self-cleavage at a specific serine bond to produce a beta-subunit with a hydroxyl group at its C-terminus and an alpha-subunit with a pyruvoyl group at its N-terminus.

It is found in the cytoplasm. It catalyses the reaction L-aspartate + H(+) = beta-alanine + CO2. The protein operates within cofactor biosynthesis; (R)-pantothenate biosynthesis; beta-alanine from L-aspartate: step 1/1. Its function is as follows. Catalyzes the pyruvoyl-dependent decarboxylation of aspartate to produce beta-alanine. In Hydrogenobaculum sp. (strain Y04AAS1), this protein is Aspartate 1-decarboxylase.